The following is a 1819-amino-acid chain: U3 small nucleolar RNA-associated protein 10 (1819 aa).

One copy of the HEAT 1 repeat lies at 583 to 620 (LDFQAILPFLLVALADPSERIRREAAAALAAIGGIYKK). 2 consecutive transmembrane segments (helical) span residues 945-965 (IQSG…AIVN) and 1001-1021 (ALLL…HSVM). 4 HEAT repeats span residues 1045–1082 (QTID…AFEH), 1269–1306 (LTLV…QNPE), 1313–1351 (IRVL…KYGK), and 1775–1812 (ALLP…VLGE).

The protein belongs to the HEATR1/UTP10 family. In terms of assembly, component of the ribosomal small subunit (SSU) processome.

The protein resides in the nucleus. It localises to the nucleolus. It is found in the membrane. Involved in nucleolar processing of pre-18S ribosomal RNA. Involved in ribosome biosynthesis. The protein is U3 small nucleolar RNA-associated protein 10 of Aspergillus clavatus (strain ATCC 1007 / CBS 513.65 / DSM 816 / NCTC 3887 / NRRL 1 / QM 1276 / 107).